We begin with the raw amino-acid sequence, 360 residues long: Galactoside alpha-(1,2)-fucosyltransferase 1 (360 aa).

At 1 to 8 (MWAPGHHH) the chain is on the cytoplasmic side. A helical; Signal-anchor for type II membrane protein membrane pass occupies residues 9–27 (LCLIFLLTCVFACVFFLLI). Topologically, residues 28-360 (HQNLFHSGLD…GINADLSPLQ (333 aa)) are lumenal. N-linked (GlcNAc...) asparagine glycans are attached at residues Asn-65, Asn-301, and Asn-327.

This sequence belongs to the glycosyltransferase 11 family. In terms of tissue distribution, expressed in brain, intestine and kidney.

It localises to the golgi apparatus. It is found in the golgi stack membrane. It carries out the reaction a ganglioside GM1 + GDP-beta-L-fucose = a ganglioside Fuc-GM1 + GDP + H(+). The enzyme catalyses a beta-D-galactosyl-(1-&gt;4)-N-acetyl-beta-D-glucosaminyl derivative + GDP-beta-L-fucose = an alpha-L-Fuc-(1-&gt;2)-beta-D-Gal-(1-&gt;4)-beta-D-GlcNAc derivative + GDP + H(+). The catalysed reaction is a ganglioside GA1 + GDP-beta-L-fucose = a ganglioside Fuc-GA1 + GDP + H(+). It catalyses the reaction a beta-D-Gal-(1-&gt;3)-beta-D-GlcNAc-(1-&gt;3)-beta-D-Gal-(1-&gt;4)-beta-D-Glc-(1&lt;-&gt;1')-Cer(d18:1(4E)) + GDP-beta-L-fucose = alpha-L-fucosyl-(1-&gt;2)- beta-D-galactosyl-(1-&gt;3)-N-acetyl-beta-D-glucosaminyl-(1-&gt;3)-beta-D-galactosyl-(1-&gt;4)-beta-D-glucosyl-(1&lt;-&gt;1')-N-acylsphing-4-enine + GDP + H(+). It carries out the reaction a neolactoside nLc4Cer(d18:1(4E)) + GDP-beta-L-fucose = a neolactoside IV(2)-alpha-Fuc-nLc4Cer(d18:1(4E)) + GDP + H(+). The enzyme catalyses beta-D-galactosyl-(1-&gt;3)-N-acetyl-D-galactosamine + GDP-beta-L-fucose = alpha-L-fucosyl-(1-&gt;2)-beta-D-galactosyl-(1-&gt;3)-N-acetyl-D-galactosamine + GDP + H(+). It functions in the pathway protein modification; protein glycosylation. In terms of biological role, catalyzes the transfer of L-fucose, from a guanosine diphosphate-beta-L-fucose, to the terminal galactose residue of glycoconjugates through an alpha(1,2) linkage leading to H antigen synthesis that is an intermediate substrate in the synthesis of ABO blood group antigens. H antigen is essential for maturation of the glomerular layer of the main olfactory bulb, in cell migration and early cell-cell contacts during tumor associated angiogenesis. Preferentially fucosylates soluble lactose and to a lesser extent, fucosylates glycolipids gangliosides GA1 and GM1a. The chain is Galactoside alpha-(1,2)-fucosyltransferase 1 from Bos taurus (Bovine).